A 530-amino-acid polypeptide reads, in one-letter code: Pentatricopeptide repeat-containing protein At5g56310 (530 aa).

10 PPR repeats span residues 77 to 114 (NTYL…CAKP), 115 to 149 (DTFT…GFDS), 150 to 180 (SVHV…MLVK), 181 to 211 (DVNV…MPCW), 214 to 248 (NEVS…NVEP), 249 to 283 (DEVT…GMNR), 284 to 314 (AVSL…VNER), 315 to 349 (NVVT…GVRP), 350 to 380 (NDVT…MRSK), and 386 to 420 (NIEH…ANAA). Positions 421–496 (IWGSLLAASN…MAGESSIEVE (76 aa)) are type E motif. Residues 497-527 (NRVYKFISGDLTHPQVERIHEILQEMDLQIQ) form a type E(+) motif region.

The protein belongs to the PPR family. PCMP-E subfamily.

This is Pentatricopeptide repeat-containing protein At5g56310 (PCMP-E13) from Arabidopsis thaliana (Mouse-ear cress).